Consider the following 324-residue polypeptide: Lactonase drp35 (324 aa).

Glutamate 47, serine 109, glycine 111, aspartate 129, threonine 132, tyrosine 134, aspartate 137, asparagine 184, aspartate 235, and serine 236 together coordinate Ca(2+). The active-site Proton donor is aspartate 235.

This sequence belongs to the SMP-30/CGR1 family. The cofactor is Ca(2+).

The protein resides in the cytoplasm. Its function is as follows. Exhibits lactonase activity. Acts in cells with perturbed membrane integrity and is possibly related to the membrane homeostasis. The polypeptide is Lactonase drp35 (drp35) (Staphylococcus aureus (strain MRSA252)).